We begin with the raw amino-acid sequence, 314 residues long: Olfactory receptor 8U9 (314 aa).

Residues 1–25 (MAQINCTQVTEFILVGLTDREELKM) lie on the Extracellular side of the membrane. Asn-5 carries an N-linked (GlcNAc...) asparagine glycan. The chain crosses the membrane as a helical span at residues 26–46 (PLFVVFLSIYLFTTLGNLGLI). The Cytoplasmic portion of the chain corresponds to 47-54 (LVIRTDAR). The chain crosses the membrane as a helical span at residues 55 to 75 (LHTPMYFFLSNLAFVDFCYSS). The Extracellular segment spans residues 76–99 (VITPKMLGNFLYKQNMISFNACAA). A disulfide bridge links Cys-97 with Cys-189. Residues 100–120 (QLGCFLAFMTAECLLLASMAY) form a helical membrane-spanning segment. Topologically, residues 121–133 (DRYVAICNPLLYM) are cytoplasmic. The chain crosses the membrane as a helical span at residues 134–154 (VLMSPGICFQLVAAPYSYSFL). Topologically, residues 155–196 (VALFHAILTFRLCYCHSNAINHFYCDDMPLLRLTCSDTHSKQ) are extracellular. A helical transmembrane segment spans residues 197-217 (LWIFVCAGIMFISSLLIVFIS). Residues 218 to 237 (YTFIISAILRMRSAEGRRKA) are Cytoplasmic-facing. The helical transmembrane segment at 238-258 (FSTCGSHMLAVTIFYGTLIFM) threads the bilayer. The Extracellular segment spans residues 259-271 (YLQPSSNHSLDTD). An N-linked (GlcNAc...) asparagine glycan is attached at Asn-265. Residues 272–292 (KMASVFYTVIIPMLNPLIYSL) traverse the membrane as a helical segment. The Cytoplasmic portion of the chain corresponds to 293 to 314 (RNKEVKDALKKLIASKNQMLSS).

This sequence belongs to the G-protein coupled receptor 1 family.

It is found in the cell membrane. Functionally, potential odorant receptor. This chain is Olfactory receptor 8U9, found in Mus musculus (Mouse).